Here is a 504-residue protein sequence, read N- to C-terminus: ATP synthase subunit alpha, chloroplastic (504 aa).

170-177 contributes to the ATP binding site; sequence GDRQTGKT.

The protein belongs to the ATPase alpha/beta chains family. As to quaternary structure, F-type ATPases have 2 components, CF(1) - the catalytic core - and CF(0) - the membrane proton channel. CF(1) has five subunits: alpha(3), beta(3), gamma(1), delta(1), epsilon(1). CF(0) has four main subunits: a, b, b' and c.

The protein resides in the plastid. It localises to the chloroplast thylakoid membrane. It catalyses the reaction ATP + H2O + 4 H(+)(in) = ADP + phosphate + 5 H(+)(out). Functionally, produces ATP from ADP in the presence of a proton gradient across the membrane. The alpha chain is a regulatory subunit. This chain is ATP synthase subunit alpha, chloroplastic, found in Triticum aestivum (Wheat).